A 266-amino-acid polypeptide reads, in one-letter code: Putative carbamate hydrolase RutD (266 aa).

Positions 14–116 constitute an AB hydrolase-1 domain; the sequence is PVVVLISGLG…VLVSVNGWLR (103 aa).

Belongs to the AB hydrolase superfamily. Hydrolase RutD family.

It catalyses the reaction carbamate + 2 H(+) = NH4(+) + CO2. In terms of biological role, involved in pyrimidine catabolism. May facilitate the hydrolysis of carbamate, a reaction that can also occur spontaneously. This Escherichia coli O81 (strain ED1a) protein is Putative carbamate hydrolase RutD.